A 248-amino-acid polypeptide reads, in one-letter code: Triosephosphate isomerase (248 aa).

Residue 9 to 11 (NWK) participates in substrate binding. Catalysis depends on His-94, which acts as the Electrophile. Glu-166 serves as the catalytic Proton acceptor. Residues Gly-172, Ser-212, and 233–234 (GG) each bind substrate.

Belongs to the triosephosphate isomerase family. In terms of assembly, homodimer.

The protein resides in the cytoplasm. The catalysed reaction is D-glyceraldehyde 3-phosphate = dihydroxyacetone phosphate. Its pathway is carbohydrate biosynthesis; gluconeogenesis. It functions in the pathway carbohydrate degradation; glycolysis; D-glyceraldehyde 3-phosphate from glycerone phosphate: step 1/1. Its function is as follows. Involved in the gluconeogenesis. Catalyzes stereospecifically the conversion of dihydroxyacetone phosphate (DHAP) to D-glyceraldehyde-3-phosphate (G3P). In Thermoanaerobacter sp. (strain X514), this protein is Triosephosphate isomerase.